We begin with the raw amino-acid sequence, 227 residues long: PKHD-type hydroxylase ABSDF3031 (227 aa).

The Fe2OG dioxygenase domain occupies 78 to 178; sequence KIIPPLFNRY…RFASFFWVQS (101 aa). The Fe cation site is built by histidine 96, aspartate 98, and histidine 159. Position 169 (arginine 169) interacts with 2-oxoglutarate.

It depends on Fe(2+) as a cofactor. The cofactor is L-ascorbate.

This chain is PKHD-type hydroxylase ABSDF3031, found in Acinetobacter baumannii (strain SDF).